The sequence spans 494 residues: PIGF/3-ketodihydrosphingosine reductase fusion protein (494 aa).

NADPH-binding residues include glycine 20, serine 22, and glycine 24. The GXSXG signature appears at 20-24; that stretch reads GGSQG. Leucine 25 contacts NADP(+). 2 residues coordinate NADPH: arginine 45 and lysine 49. Valine 54 contributes to the NADP(+) binding site. The NADPH site is built by aspartate 74 and leucine 75. A helical membrane pass occupies residues 148–168; it reads ILLVGSLLSSLPIIGYSAYSP. NADP(+) is bound by residues tyrosine 166, lysine 170, and isoleucine 199. Catalysis depends on tyrosine 166, which acts as the Proton acceptor. Residue lysine 170 is the Lowers pKa of active site Tyr of the active site. 6 consecutive transmembrane segments (helical) span residues 264-284, 312-332, 370-390, 402-422, 444-464, and 473-493; these read HDNPILEYLFALVSLLAWPFY, IFTLLLTFTQLTIFYLSLNCL, LAGAASMLIGSLLISFILVAF, YFCALTLSVFTVYPLASTLAF, LRSWGPIIGAWFGAFPIPLDW, and ITIVIGAFLGYAFAAIVGEIL.

The protein in the N-terminal section; belongs to the short-chain dehydrogenases/reductases (SDR) family. In the C-terminal section; belongs to the PIGF family.

The protein localises to the endoplasmic reticulum membrane. The enzyme catalyses sphinganine + NADP(+) = 3-oxosphinganine + NADPH + H(+). The protein operates within glycolipid biosynthesis; glycosylphosphatidylinositol-anchor biosynthesis. Its pathway is lipid metabolism; sphingolipid metabolism. Functionally, acts in the GPI biosynthetic pathway between GlcNAc-PI synthesis and GPI transfer to protein. Required for the formation of complete GPI precursors CP1 and CP2. In terms of biological role, catalyzes the reduction of 3'-oxosphinganine (3-ketodihydrosphingosine/KDS) to sphinganine (dihydrosphingosine/DHS), the second step of de novo sphingolipid biosynthesis. This Schizosaccharomyces pombe (strain 972 / ATCC 24843) (Fission yeast) protein is PIGF/3-ketodihydrosphingosine reductase fusion protein.